The following is a 226-amino-acid chain: Pyridoxal 5'-phosphate synthase subunit PdxT (226 aa).

60-62 (GES) serves as a coordination point for L-glutamine. The active-site Nucleophile is cysteine 92. Residues arginine 121 and 150–151 (IR) each bind L-glutamine. Catalysis depends on charge relay system residues histidine 191 and glutamate 193.

It belongs to the glutaminase PdxT/SNO family. In the presence of PdxS, forms a dodecamer of heterodimers. Only shows activity in the heterodimer.

It catalyses the reaction aldehydo-D-ribose 5-phosphate + D-glyceraldehyde 3-phosphate + L-glutamine = pyridoxal 5'-phosphate + L-glutamate + phosphate + 3 H2O + H(+). The catalysed reaction is L-glutamine + H2O = L-glutamate + NH4(+). The protein operates within cofactor biosynthesis; pyridoxal 5'-phosphate biosynthesis. Functionally, catalyzes the hydrolysis of glutamine to glutamate and ammonia as part of the biosynthesis of pyridoxal 5'-phosphate. The resulting ammonia molecule is channeled to the active site of PdxS. This Nocardia farcinica (strain IFM 10152) protein is Pyridoxal 5'-phosphate synthase subunit PdxT.